Here is a 168-residue protein sequence, read N- to C-terminus: Plastocyanin, chloroplastic (168 aa).

The transit peptide at 1–70 (MASVAAAAVS…SSLLLVASAN (70 aa)) directs the protein to the chloroplast. The Plastocyanin-like domain maps to 71-168 (AATVKMGGDD…AGMKGVVTVS (98 aa)). Positions 108, 153, 156, and 161 each coordinate Cu cation.

Belongs to the plastocyanin family. It depends on Cu(2+) as a cofactor.

Its subcellular location is the plastid. The protein localises to the chloroplast thylakoid membrane. Its function is as follows. Participates in electron transfer between P700 and the cytochrome b6-f complex in photosystem I. In Physcomitrium patens (Spreading-leaved earth moss), this protein is Plastocyanin, chloroplastic (PETE).